A 376-amino-acid polypeptide reads, in one-letter code: Glutamate 5-kinase (376 aa).

Position 10 (Lys10) interacts with ATP. Substrate is bound by residues Ser50, Asp137, and Asn149. 169–170 serves as a coordination point for ATP; that stretch reads TD. Residues 275-353 enclose the PUA domain; sequence RGRLVLDAGA…AEIAGVLGFM (79 aa).

It belongs to the glutamate 5-kinase family.

Its subcellular location is the cytoplasm. The enzyme catalyses L-glutamate + ATP = L-glutamyl 5-phosphate + ADP. It functions in the pathway amino-acid biosynthesis; L-proline biosynthesis; L-glutamate 5-semialdehyde from L-glutamate: step 1/2. Catalyzes the transfer of a phosphate group to glutamate to form L-glutamate 5-phosphate. The protein is Glutamate 5-kinase of Alcanivorax borkumensis (strain ATCC 700651 / DSM 11573 / NCIMB 13689 / SK2).